The chain runs to 69 residues: Large ribosomal subunit protein bL31 (69 aa).

4 residues coordinate Zn(2+): Cys-17, Cys-19, Cys-37, and Cys-40.

It belongs to the bacterial ribosomal protein bL31 family. Type A subfamily. In terms of assembly, part of the 50S ribosomal subunit. The cofactor is Zn(2+).

In terms of biological role, binds the 23S rRNA. The sequence is that of Large ribosomal subunit protein bL31 from Clostridium novyi (strain NT).